A 285-amino-acid polypeptide reads, in one-letter code: Ribosomal RNA large subunit methyltransferase F (285 aa).

Belongs to the methyltransferase superfamily. METTL16/RlmF family.

It localises to the cytoplasm. It catalyses the reaction adenosine(1618) in 23S rRNA + S-adenosyl-L-methionine = N(6)-methyladenosine(1618) in 23S rRNA + S-adenosyl-L-homocysteine + H(+). Functionally, specifically methylates the adenine in position 1618 of 23S rRNA. This Christiangramia forsetii (strain DSM 17595 / CGMCC 1.15422 / KT0803) (Gramella forsetii) protein is Ribosomal RNA large subunit methyltransferase F.